The primary structure comprises 207 residues: Cilia- and flagella-associated protein 418 (207 aa).

A required for interaction with FAM161A region spans residues 1–75 (MAEDLDELLD…LINEILEEPN (75 aa)). The interval 26 to 52 (MVEQPKGCGGGTHSSDRNQAKAKETLR) is disordered. The segment covering 39 to 52 (SSDRNQAKAKETLR) has biased composition (basic and acidic residues).

In terms of assembly, interacts (via N-terminus) with FAM161A (via central region); the interaction is direct. In terms of tissue distribution, widely expressed, with highest levels in heart and brain. Also expressed in the retina (at protein level).

The protein resides in the cytoplasm. It localises to the photoreceptor inner segment. May be involved in photoreceptor outer segment disk morphogenesis. The chain is Cilia- and flagella-associated protein 418 from Homo sapiens (Human).